Consider the following 347-residue polypeptide: MQTYGSRNVDYGWWAGNSRFADRTGLWLAAHVAQASFIVLWAGAITLFEVARYTPSIPMGEQGLILIPHLAALGIGVGAGGVVVNTFPYTAIGAVHLISSFVFAFGAIFHVRFGPESIGEGSDSKFAFSWDDPKQLGLILGHHLLLLGLGAIFFVGWIRFHGVYDSTIGDVRIVSNPGATILSVIFEYGWFTPEHNPFFVNNLEDLASGHAFIGVVLLSGGVWHITQEPFAWAQRLLASLFSAEGLLSSALAGLSMLGFAAAYFSAVNTLAYPIEFFGPPLELQFNIMPYFVDSVDLPAGVYSARAWLCNVHFYLAFFVLQGHLWHAIRAIGFDFKKVSNAFATLSN.

Transmembrane regions (helical) follow at residues 25 to 45 (GLWL…AGAI), 64 to 84 (LILI…GVVV), 91 to 111 (AIGA…IFHV), 206 to 226 (LASG…WHIT), 247 to 267 (LSSA…FSAV), and 308 to 328 (LCNV…WHAI).

The protein belongs to the PsbB/PsbC family. IsiA/Pcb subfamily. As to quaternary structure, the antenna complex consists of chlorophylls (a and b) and chlorophyll a/b binding proteins. Chlorophyll a is required as a cofactor. The cofactor is chlorophyll b.

It localises to the cellular thylakoid membrane. In terms of biological role, the antenna complex functions as a light receptor, it captures and delivers excitation energy to photosystems II and I. The Prochlorales pcb genes are not related to higher plant LHCs. This chain is Chlorophyll a/b light-harvesting protein PcbB (pcbB), found in Prochlorothrix hollandica.